Consider the following 177-residue polypeptide: Protein C2-DOMAIN ABA-RELATED 4 (177 aa).

The region spanning 4 to 118 is the C2 domain; the sequence is ACPARTSSLM…LRMQLDGLPS (115 aa). Residues Arg33, Asp34, Asp39, Asp85, His86, Asp87, and Asp93 each coordinate Ca(2+).

It belongs to the plant CAR protein family. Dimers and oligomers. Binds to PYR/PYL/RCAR abscisic acid intracellular receptors in an ABA-independent manner, both at the plasma membrane and in the nucleus. Interacts directly with PYR1, PYL1, PYL4, PYL6 and PYL8. Binds phospholipids in a Ca(2+)-dependent manner. Interacts with YchF1. Requires Ca(2+) as cofactor.

The protein localises to the cell membrane. The protein resides in the nucleus. Its subcellular location is the cytoplasm. It is found in the cytosol. Mediates the transient calcium-dependent interaction of PYR/PYL/RCAR abscisic acid (ABA) receptors with the plasma membrane and thus regulates ABA sensitivity. Stimulates the GTPase/ATPase activities of YchF1, and regulates its subcellular localization. Promotes tolerance towards salinity stress by limiting the accumulation of reactive oxygen species (ROS). Promotes resistance to bacterial pathogens (e.g. Xanthomonas oryzae pv. oryzae and P.syringae pv. tomato DC3000). Binds liposomes in the absence of exogenous Ca(2+), but this activity is enhanced in the presence of Ca(2+) and generates membrane curvature. In Arabidopsis thaliana (Mouse-ear cress), this protein is Protein C2-DOMAIN ABA-RELATED 4.